Reading from the N-terminus, the 515-residue chain is Elongation factor 1-alpha S (515 aa).

Residues 5–258 (KTHINLVVIG…DAMKPPKRPT (254 aa)) enclose the tr-type G domain. The G1 stretch occupies residues 14-21 (GHVDAGKS). 14 to 21 (GHVDAGKS) serves as a coordination point for GTP. K55 is subject to N6,N6-dimethyllysine. The G2 stretch occupies residues 70–74 (GITID). Residue K79 is modified to N6,N6,N6-trimethyllysine. Positions 91–94 (DAPG) are G3. GTP contacts are provided by residues 91-95 (DAPGH) and 151-154 (NKMD). The tract at residues 151–154 (NKMD) is G4. Positions 187-206 (KKDKGDKKKGDKKEKKDKKD) are disordered. A compositionally biased stretch (basic and acidic residues) spans 189–206 (DKGDKKKGDKKEKKDKKD). The tract at residues 222–224 (SGW) is G5. An N6-methyllysine modification is found at K289. K334 is modified (N6,N6,N6-trimethyllysine). The segment at 396-419 (KRGKQTHDVSDDTEWATKDDAEPR) is disordered. Residues 398 to 419 (GKQTHDVSDDTEWATKDDAEPR) show a composition bias toward basic and acidic residues. At K441 the chain carries N6,N6,N6-trimethyllysine.

This sequence belongs to the TRAFAC class translation factor GTPase superfamily. Classic translation factor GTPase family. EF-Tu/EF-1A subfamily.

The protein resides in the cytoplasm. This protein promotes the GTP-dependent binding of aminoacyl-tRNA to the A-site of ribosomes during protein biosynthesis. This is Elongation factor 1-alpha S (TEF-S) from Porphyra purpurea (Red seaweed).